Here is a 363-residue protein sequence, read N- to C-terminus: Pyruvate dehydrogenase E1 component subunit alpha, mitochondrial (363 aa).

The N-terminal 2 residues, 1–2 (RN), are a transit peptide targeting the mitochondrion. Lysine 36 is subject to N6-acetyllysine; alternate. An N6-succinyllysine; alternate modification is found at lysine 36. Pyruvate contacts are provided by histidine 65, tyrosine 91, arginine 92, alanine 130, glycine 138, valine 140, aspartate 169, glycine 170, alanine 171, asparagine 198, and tyrosine 200. Positions 91 and 92 each coordinate thiamine diphosphate. Glycine 138, valine 140, aspartate 169, glycine 170, alanine 171, and asparagine 198 together coordinate thiamine diphosphate. Position 169 (aspartate 169) interacts with Mg(2+). Mg(2+) contacts are provided by asparagine 198 and tyrosine 200. Phosphoserine; by PDK1 is present on serine 205. Lysine 217 carries the post-translational modification N6-acetyllysine; alternate. Lysine 217 carries the N6-succinyllysine; alternate modification. At lysine 240 the chain carries N6-acetyllysine. Lysine 250 carries the N6-succinyllysine modification. Position 265 (histidine 265) interacts with thiamine diphosphate. A Phosphoserine; by PDK1, PDK2, PDK3 and PDK4 modification is found at serine 266. Serine 268 carries the post-translational modification Phosphoserine. At serine 273 the chain carries Phosphoserine; by PDK1, PDK2, PDK3 and PDK4. At tyrosine 274 the chain carries Phosphotyrosine. N6-acetyllysine; alternate is present on lysine 286. Lysine 286 is subject to N6-succinyllysine; alternate. N6-acetyllysine occurs at positions 294 and 309. The residue at position 358 (lysine 358) is an N6-succinyllysine.

In terms of assembly, heterotetramer of two PDHA1 and two PDHB subunits. The heterotetramer interacts with DLAT, and is part of the multimeric pyruvate dehydrogenase complex that contains multiple copies of pyruvate dehydrogenase (E1), dihydrolipoamide acetyltransferase (DLAT, E2) and lipoamide dehydrogenase (DLD, E3). These subunits are bound to an inner core composed of about 48 DLAT and 12 PDHX molecules. Thiamine diphosphate is required as a cofactor. Mg(2+) serves as cofactor. Phosphorylation at Ser-205, Ser-266 and Ser-273 by PDK family kinases inactivates the enzyme; for this phosphorylation at a single site is sufficient. Phosphorylation at Ser-266 interferes with access to active site, and thereby inactivates the enzyme. Dephosphorylation at all three sites, i.e. at Ser-205, Ser-266 and Ser-273, is required for reactivation. In terms of processing, acetylation alters the phosphorylation pattern. Deacetylated by SIRT3.

Its subcellular location is the mitochondrion matrix. It catalyses the reaction N(6)-[(R)-lipoyl]-L-lysyl-[protein] + pyruvate + H(+) = N(6)-[(R)-S(8)-acetyldihydrolipoyl]-L-lysyl-[protein] + CO2. With respect to regulation, pyruvate dehydrogenase activity is inhibited by phosphorylation of PDHA1; it is reactivated by dephosphorylation. In terms of biological role, the pyruvate dehydrogenase complex catalyzes the overall conversion of pyruvate to acetyl-CoA and CO(2), and thereby links the glycolytic pathway to the tricarboxylic cycle. The chain is Pyruvate dehydrogenase E1 component subunit alpha, mitochondrial (PDHA) from Sminthopsis macroura (Stripe-faced dunnart).